A 1352-amino-acid polypeptide reads, in one-letter code: Astrotactin-2 (1352 aa).

The interval 1-31 is disordered; that stretch reads MAAAGARRSPGRGLGLRGRPRLGFHPGPPPP. The first 51 residues, 1–51, serve as a signal peptide directing secretion; the sequence is MAAAGARRSPGRGLGLRGRPRLGFHPGPPPPPPPPLLLLFLLLLPPPPLLA. The Lumenal segment spans residues 52-218; it reads GATAAAASRE…IVEEQMHILH (167 aa). N-linked (GlcNAc...) asparagine glycosylation occurs at N180. Residues 219 to 239 traverse the membrane as a helical segment; the sequence is ISVMGGLIALLLLLLVFTVAL. Residues 240-447 are Cytoplasmic-facing; it reads YAQRRWQKRR…KGLLKSPVNK (208 aa). 2 disordered regions span residues 308 to 327 and 375 to 421; these read EEEE…DEFG and TPVE…ADDE. Residues 383-392 are compositionally biased toward polar residues; that stretch reads QPASRSSTSA. Residues 448-468 traverse the membrane as a helical segment; the sequence is TALTLIAVSSCILAMVCGNQM. At 469–1352 the chain is on the lumenal side; it reads SCPLTVKVTL…RNTYGETKGR (884 aa). EGF-like domains are found at residues 523-563, 664-708, and 712-764; these read VRDL…HLCV, PVRD…SGCY, and KGID…KSCL. Intrachain disulfides connect C527–C539, C535–C546, C548–C562, C668–C681, C675–C692, C694–C707, C716–C728, C724–C748, and C750–C763. Residue N796 is glycosylated (N-linked (GlcNAc...) asparagine). Cystine bridges form between C838-C1000, C929-C990, and C996-C1003. Residue N1033 is glycosylated (N-linked (GlcNAc...) asparagine). Disulfide bonds link C1049–C1060, C1062–C1075, C1149–C1171, C1203–C1290, and C1311–C1334. Positions 1079–1201 constitute a Fibronectin type-III domain; it reads PQPVLRLSPT…SELSTVTLRT (123 aa).

The protein belongs to the astrotactin family. In terms of assembly, interacts with ASTN1; the interaction is not calcium-dependent. As to expression, detected in cerebellum granule neurons; not detected in astroglia (at protein level). Detected primarily in cerebellum, and at lower levels in brain cortex, olfactory bulb, hindbrain and hippocampus dentate gyrus. Between 6 and 10 days after birth, when granule cell migration occurs in the cerebellum, detected in granule cell precursors in the external germinal layer, the molecular layer, the internal granule layer and in Purkinje neurons. Detected in postmitotic neurons in adult cerebellum.

It localises to the membrane. The protein localises to the perikaryon. The protein resides in the cytoplasm. It is found in the cell cortex. Its subcellular location is the early endosome. It localises to the late endosome. The protein localises to the cytoplasmic vesicle. The protein resides in the clathrin-coated vesicle. Functionally, mediates recycling of the neuronal cell adhesion molecule ASTN1 to the anterior pole of the cell membrane in migrating neurons. Promotes ASTN1 internalization and intracellular transport of endocytosed ASTN1. Selectively binds inositol-4,5-bisphosphate, inositol-3,4,5-trisphosphate and inositol-1,3,4,5-tetrakisphosphate, suggesting it is recruited to membranes that contain lipids with a phosphoinositide headgroup. The protein is Astrotactin-2 (Astn2) of Mus musculus (Mouse).